Here is a 349-residue protein sequence, read N- to C-terminus: UDP-3-O-acylglucosamine N-acyltransferase (349 aa).

H248 serves as the catalytic Proton acceptor.

The protein belongs to the transferase hexapeptide repeat family. LpxD subfamily. In terms of assembly, homotrimer.

The catalysed reaction is a UDP-3-O-[(3R)-3-hydroxyacyl]-alpha-D-glucosamine + a (3R)-hydroxyacyl-[ACP] = a UDP-2-N,3-O-bis[(3R)-3-hydroxyacyl]-alpha-D-glucosamine + holo-[ACP] + H(+). Its pathway is bacterial outer membrane biogenesis; LPS lipid A biosynthesis. Its function is as follows. Catalyzes the N-acylation of UDP-3-O-acylglucosamine using 3-hydroxyacyl-ACP as the acyl donor. Is involved in the biosynthesis of lipid A, a phosphorylated glycolipid that anchors the lipopolysaccharide to the outer membrane of the cell. The protein is UDP-3-O-acylglucosamine N-acyltransferase of Colwellia psychrerythraea (strain 34H / ATCC BAA-681) (Vibrio psychroerythus).